The following is a 345-amino-acid chain: Eukaryotic translation initiation factor 3 subunit F (345 aa).

One can recognise an MPN domain in the interval 30 to 166 (VVIQPQALFS…TRAYISAPVG (137 aa)). Residues 308 to 345 (GGESGSTESGQRGGQRGGKGGRGGQQRNQERSGEEVRA) form a disordered region. The span at 318-331 (QRGGQRGGKGGRGG) shows a compositional bias: gly residues. The span at 335–345 (NQERSGEEVRA) shows a compositional bias: basic and acidic residues.

The protein belongs to the eIF-3 subunit F family. Component of the eukaryotic translation initiation factor 3 (eIF-3) complex.

Its subcellular location is the cytoplasm. In terms of biological role, component of the eukaryotic translation initiation factor 3 (eIF-3) complex, which is involved in protein synthesis of a specialized repertoire of mRNAs and, together with other initiation factors, stimulates binding of mRNA and methionyl-tRNAi to the 40S ribosome. The eIF-3 complex specifically targets and initiates translation of a subset of mRNAs involved in cell proliferation. The protein is Eukaryotic translation initiation factor 3 subunit F of Aspergillus terreus (strain NIH 2624 / FGSC A1156).